The chain runs to 476 residues: Bifunctional protein HldE (476 aa).

Residues 1-318 (MKPTLPNYDQ…AEAIHGSQDS (318 aa)) form a ribokinase region. 195–198 (NMLE) lines the ATP pocket. Residue aspartate 264 is part of the active site. The cytidylyltransferase stretch occupies residues 344–476 (MTNGCFDILH…IIEAIKGGRG (133 aa)).

It in the N-terminal section; belongs to the carbohydrate kinase PfkB family. The protein in the C-terminal section; belongs to the cytidylyltransferase family. As to quaternary structure, homodimer.

The enzyme catalyses D-glycero-beta-D-manno-heptose 7-phosphate + ATP = D-glycero-beta-D-manno-heptose 1,7-bisphosphate + ADP + H(+). It carries out the reaction D-glycero-beta-D-manno-heptose 1-phosphate + ATP + H(+) = ADP-D-glycero-beta-D-manno-heptose + diphosphate. It functions in the pathway nucleotide-sugar biosynthesis; ADP-L-glycero-beta-D-manno-heptose biosynthesis; ADP-L-glycero-beta-D-manno-heptose from D-glycero-beta-D-manno-heptose 7-phosphate: step 1/4. Its pathway is nucleotide-sugar biosynthesis; ADP-L-glycero-beta-D-manno-heptose biosynthesis; ADP-L-glycero-beta-D-manno-heptose from D-glycero-beta-D-manno-heptose 7-phosphate: step 3/4. Functionally, catalyzes the phosphorylation of D-glycero-D-manno-heptose 7-phosphate at the C-1 position to selectively form D-glycero-beta-D-manno-heptose-1,7-bisphosphate. Its function is as follows. Catalyzes the ADP transfer from ATP to D-glycero-beta-D-manno-heptose 1-phosphate, yielding ADP-D-glycero-beta-D-manno-heptose. The sequence is that of Bifunctional protein HldE from Aliivibrio salmonicida (strain LFI1238) (Vibrio salmonicida (strain LFI1238)).